The sequence spans 133 residues: Putative N-acetylgalactosamine permease IIC component 2 (133 aa).

The Cytoplasmic segment spans residues 1 to 2 (ME). A PTS EIIC type-4 domain is found at 1-133 (MEISLLQAFA…CDLATNPRRI (133 aa)). The chain crosses the membrane as a helical span at residues 3 to 23 (ISLLQAFALGIIAFIAGLDMF). Residues 24–32 (NGLTHMHRP) are Periplasmic-facing. The chain crosses the membrane as a helical span at residues 33-53 (VVLGPLVGLVLGDLHTGILTG). Over 54–65 (GTLELVWMGLAP) the chain is Cytoplasmic. The chain crosses the membrane as a helical span at residues 66–86 (LAGAQPPNVIIGTIVGTAFAI). At 87-93 (TTGVKPD) the chain is on the periplasmic side. The chain crosses the membrane as a helical span at residues 94–114 (VAVGVAVPFAVAVQMGITFLF). Residues 115–133 (SVMSGVMSRCDLATNPRRI) are Cytoplasmic-facing.

The protein localises to the cell inner membrane. In terms of biological role, the phosphoenolpyruvate-dependent sugar phosphotransferase system (PTS), a major carbohydrate active -transport system, catalyzes the phosphorylation of incoming sugar substrates concomitant with their translocation across the cell membrane. This system is involved in N-acetylgalactosamine transport. The chain is Putative N-acetylgalactosamine permease IIC component 2 (agaW) from Escherichia coli (strain K12).